The primary structure comprises 488 residues: Calcium uniporter protein, mitochondrial (488 aa).

A mitochondrion-targeting transit peptide spans 1–74 (MRALVSRTPI…RSFQLSASSR (74 aa)). The disordered stretch occupies residues 65 to 117 (RSFQLSASSRDKRGPQSAEPDPLERLEVKKVQQQHENEKDDSGRDTKSGGKVA). At 75-339 (DKRGPQSAEP…ECDALAHRGA (265 aa)) the chain is on the mitochondrial matrix side. Basic and acidic residues predominate over residues 86 to 112 (PLERLEVKKVQQQHENEKDDSGRDTKS). The helical transmembrane segment at 340-361 (QRVALGGFGILAFWWYIVYKLT) threads the bilayer. Residues 362 to 370 (FETDLGWDT) are Mitochondrial intermembrane-facing. Residues 368–376 (WDTMEPVTY) carry the Selectivity filter motif. Residues 371–391 (MEPVTYLVSLSTLMGGYLWFL) form a helical membrane-spanning segment. Residue Glu372 coordinates Ca(2+). Over 392–488 (YHNREISYRS…ERPKDDRDDD (97 aa)) the chain is Mitochondrial matrix. Residues 464 to 488 (ALKKERRLKNGSQKEERPKDDRDDD) form a disordered region. Residues 475–488 (SQKEERPKDDRDDD) are compositionally biased toward basic and acidic residues.

The protein belongs to the MCU (TC 1.A.77) family. As to quaternary structure, homotetramer, assembles in a dimer or dimers configuration with two interfaces.

The protein resides in the mitochondrion inner membrane. It carries out the reaction Ca(2+)(in) = Ca(2+)(out). Inhibited by ruthenium red or its derivative Ru360. In terms of biological role, highly selective calcium channel localized to the inner mitochondrial membrane, which mediates calcium uptake into the mitochondrial matrix. Mitochondrial calcium homeostasis plays key roles in cellular physiology and regulates ATP production, cytoplasmic calcium signals and activation of cell death pathways. Sufficient to operate as a pore-forming channel without the need of calcium-sensor or auxiliary subunit. The protein is Calcium uniporter protein, mitochondrial of Neosartorya fischeri (strain ATCC 1020 / DSM 3700 / CBS 544.65 / FGSC A1164 / JCM 1740 / NRRL 181 / WB 181) (Aspergillus fischerianus).